The chain runs to 187 residues: Elongation factor P (187 aa).

This sequence belongs to the elongation factor P family.

Its subcellular location is the cytoplasm. It participates in protein biosynthesis; polypeptide chain elongation. Its function is as follows. Involved in peptide bond synthesis. Stimulates efficient translation and peptide-bond synthesis on native or reconstituted 70S ribosomes in vitro. Probably functions indirectly by altering the affinity of the ribosome for aminoacyl-tRNA, thus increasing their reactivity as acceptors for peptidyl transferase. The polypeptide is Elongation factor P (Pseudarthrobacter chlorophenolicus (strain ATCC 700700 / DSM 12829 / CIP 107037 / JCM 12360 / KCTC 9906 / NCIMB 13794 / A6) (Arthrobacter chlorophenolicus)).